The primary structure comprises 755 residues: Catalase-peroxidase (755 aa).

The segment at residues 91–245 is a cross-link (tryptophyl-tyrosyl-methioninium (Trp-Tyr) (with M-271)); sequence WHSAGTYRTA…LAAVQMGLIY (155 aa). H92 serves as the catalytic Proton acceptor. The tract at residues 193–229 is disordered; it reads DNRYGKDPESMQPPGEGTLVAEPAEHGNEESRTNQGE. Residues 215–224 show a composition bias toward basic and acidic residues; it reads PAEHGNEESR. The tryptophyl-tyrosyl-methioninium (Tyr-Met) (with W-91) cross-link spans 245 to 271; that stretch reads YVNPEGPEGNPDPVASAKDIRETFGRM. Residue H286 participates in heme binding.

It belongs to the peroxidase family. Peroxidase/catalase subfamily. Homodimer or homotetramer. It depends on heme b as a cofactor. In terms of processing, formation of the three residue Trp-Tyr-Met cross-link is important for the catalase, but not the peroxidase activity of the enzyme.

The enzyme catalyses H2O2 + AH2 = A + 2 H2O. The catalysed reaction is 2 H2O2 = O2 + 2 H2O. Bifunctional enzyme with both catalase and broad-spectrum peroxidase activity. This is Catalase-peroxidase from Pseudomonas fluorescens (strain Pf0-1).